The primary structure comprises 85 residues: MFVRSLFLALLLATIVAADIDFSTCARMDVPILKKAAQGLCITSCSMQNCGTGSCKKRSGRPTCVCYRCANGGGDIPLGALIKRG.

Residues 1–17 (MFVRSLFLALLLATIVA) form the signal peptide. Residues 82–85 (IKRG) constitute a propeptide that is removed on maturation.

Expressed in the pharynx (at protein level). Detected in pharyngeal neurons and secretory cells.

The protein resides in the secreted. In terms of biological role, exhibits antimicrobial activity against the Gram-positive bacteria B.subtilis IFO 3134, K.varians MAFF 118076 and S.aureus ATCC 6538P, the Gram-negative bacteria A.tumefaciens MAFF 1001, B.bacteriovorus MAFF 106101 and K.pneumoniae MAFF 519002, and the yeasts C.krusei MAFF 114085, K.thermotolerans MAFF 113848 and T.delbrueckii MAFF 113811. The polypeptide is Antibacterial factor-related peptide 2 (Caenorhabditis elegans).